The chain runs to 469 residues: Glutamate--tRNA ligase (469 aa).

Positions 11 to 21 (PSPTGFIHLGN) match the 'HIGH' region motif. A 'KMSKS' region motif is present at residues 243–247 (KMSKR). Lysine 246 is a binding site for ATP.

The protein belongs to the class-I aminoacyl-tRNA synthetase family. Glutamate--tRNA ligase type 1 subfamily. As to quaternary structure, monomer.

Its subcellular location is the cytoplasm. The enzyme catalyses tRNA(Glu) + L-glutamate + ATP = L-glutamyl-tRNA(Glu) + AMP + diphosphate. In terms of biological role, catalyzes the attachment of glutamate to tRNA(Glu) in a two-step reaction: glutamate is first activated by ATP to form Glu-AMP and then transferred to the acceptor end of tRNA(Glu). The polypeptide is Glutamate--tRNA ligase (Burkholderia cenocepacia (strain HI2424)).